The sequence spans 503 residues: Aspartyl/glutamyl-tRNA(Asn/Gln) amidotransferase subunit B (503 aa).

The protein belongs to the GatB/GatE family. GatB subfamily. As to quaternary structure, heterotrimer of A, B and C subunits.

The enzyme catalyses L-glutamyl-tRNA(Gln) + L-glutamine + ATP + H2O = L-glutaminyl-tRNA(Gln) + L-glutamate + ADP + phosphate + H(+). It catalyses the reaction L-aspartyl-tRNA(Asn) + L-glutamine + ATP + H2O = L-asparaginyl-tRNA(Asn) + L-glutamate + ADP + phosphate + 2 H(+). In terms of biological role, allows the formation of correctly charged Asn-tRNA(Asn) or Gln-tRNA(Gln) through the transamidation of misacylated Asp-tRNA(Asn) or Glu-tRNA(Gln) in organisms which lack either or both of asparaginyl-tRNA or glutaminyl-tRNA synthetases. The reaction takes place in the presence of glutamine and ATP through an activated phospho-Asp-tRNA(Asn) or phospho-Glu-tRNA(Gln). The chain is Aspartyl/glutamyl-tRNA(Asn/Gln) amidotransferase subunit B from Rhodococcus erythropolis (strain PR4 / NBRC 100887).